The primary structure comprises 392 residues: Histidinol-phosphate aminotransferase 2 (392 aa).

Lysine 228 carries the N6-(pyridoxal phosphate)lysine modification.

This sequence belongs to the class-II pyridoxal-phosphate-dependent aminotransferase family. Histidinol-phosphate aminotransferase subfamily. In terms of assembly, homodimer. It depends on pyridoxal 5'-phosphate as a cofactor.

The enzyme catalyses L-histidinol phosphate + 2-oxoglutarate = 3-(imidazol-4-yl)-2-oxopropyl phosphate + L-glutamate. The protein operates within amino-acid biosynthesis; L-histidine biosynthesis; L-histidine from 5-phospho-alpha-D-ribose 1-diphosphate: step 7/9. This Nitrosospira multiformis (strain ATCC 25196 / NCIMB 11849 / C 71) protein is Histidinol-phosphate aminotransferase 2.